A 107-amino-acid chain; its full sequence is Integration host factor subunit beta (107 aa).

Residues 82–101 show a composition bias toward basic and acidic residues; that stretch reads PGKELRERVDRRAGEPLKAE. The tract at residues 82–107 is disordered; that stretch reads PGKELRERVDRRAGEPLKAEEPDDDL.

It belongs to the bacterial histone-like protein family. As to quaternary structure, heterodimer of an alpha and a beta chain.

Its function is as follows. This protein is one of the two subunits of integration host factor, a specific DNA-binding protein that functions in genetic recombination as well as in transcriptional and translational control. The polypeptide is Integration host factor subunit beta (Paraburkholderia phytofirmans (strain DSM 17436 / LMG 22146 / PsJN) (Burkholderia phytofirmans)).